Consider the following 78-residue polypeptide: Acyl carrier protein (78 aa).

Positions 2–77 (SDIAERVKKI…DAVKFIEKAQ (76 aa)) constitute a Carrier domain. Residue Ser37 is modified to O-(pantetheine 4'-phosphoryl)serine.

This sequence belongs to the acyl carrier protein (ACP) family. Post-translationally, 4'-phosphopantetheine is transferred from CoA to a specific serine of apo-ACP by AcpS. This modification is essential for activity because fatty acids are bound in thioester linkage to the sulfhydryl of the prosthetic group.

It localises to the cytoplasm. It participates in lipid metabolism; fatty acid biosynthesis. Carrier of the growing fatty acid chain in fatty acid biosynthesis. In Sinorhizobium fredii (strain NBRC 101917 / NGR234), this protein is Acyl carrier protein.